The following is a 381-amino-acid chain: CCN family member 1 (381 aa).

Residues 1-24 (MSSRIARALALVVTLLHLTRLALS) form the signal peptide. An IGFBP N-terminal domain is found at 25–94 (TCPAACHCPL…TALKGICRAQ (70 aa)). 6 cysteine pairs are disulfide-bonded: C26–C50, C30–C52, C32–C53, C39–C56, C64–C78, and C70–C91. Residues 98–164 (RPCEYNSRIY…GQCCEEWVCD (67 aa)) enclose the VWFC domain. Position 188 is a phosphoserine; by FAM20C (S188). Residues 228–273 (KCIVQTTSWSQCSKTCGTGISTRVTNDNPECRLVKETRICEVRPCG) form the TSP type-1 domain. The segment at 279 to 315 (SLKKGKKCSKTKKSPEPVRFTYAGCLSVKKYRPKYCG) is heparin-binding. Intrachain disulfides connect C286-C323, C303-C337, C314-C353, C317-C355, and C322-C359. The CTCK domain maps to 286–360 (CSKTKKSPEP…QSCKCNYNCP (75 aa)).

It belongs to the CCN family. In terms of assembly, interaction with integrins is heparin- and cell-type-dependent and promotes cell adhesion. In skin fibroblasts it binds ITGA6/ITGB1, in endothelial cells, binds ITGAV/ITGB3 and in platelets, ITGA2B/ITGB3. Binds, in vitro, ITGAV/ITGB5.

The protein localises to the secreted. Promotes cell proliferation, chemotaxis, angiogenesis and cell adhesion. Appears to play a role in wound healing by up-regulating, in skin fibroblasts, the expression of a number of genes involved in angiogenesis, inflammation and matrix remodeling including VEGA-A, VEGA-C, MMP1, MMP3, TIMP1, uPA, PAI-1 and integrins alpha-3 and alpha-5. CCN1-mediated gene regulation is dependent on heparin-binding. Down-regulates the expression of alpha-1 and alpha-2 subunits of collagen type-1. Promotes cell adhesion and adhesive signaling through integrin alpha-6/beta-1, cell migration through integrin alpha-v/beta-5 and cell proliferation through integrin alpha-v/beta-3. The polypeptide is CCN family member 1 (Homo sapiens (Human)).